A 229-amino-acid chain; its full sequence is UPF0758 protein Mbar_A2303 (229 aa).

Positions 106 to 228 constitute an MPN domain; the sequence is KVCSPKDVYT…YVSLKDEGFV (123 aa). Zn(2+) contacts are provided by H177, H179, and D190. Positions 177–190 match the JAMM motif motif; the sequence is HNHPSGDPSPSRED.

Belongs to the UPF0758 family.

The sequence is that of UPF0758 protein Mbar_A2303 from Methanosarcina barkeri (strain Fusaro / DSM 804).